Here is a 192-residue protein sequence, read N- to C-terminus: Ion-translocating oxidoreductase complex subunit A (192 aa).

6 helical membrane-spanning segments follow: residues 5–25, 39–59, 72–92, 102–122, 134–154, and 171–191; these read LLLL…FLGL, IGMS…SYLV, LRTM…EMLV, ALGI…VALL, AIYG…FSAM, and AIAM…TGLV.

It belongs to the NqrDE/RnfAE family. The complex is composed of six subunits: RnfA, RnfB, RnfC, RnfD, RnfE and RnfG.

The protein localises to the cell inner membrane. Functionally, part of a membrane-bound complex that couples electron transfer with translocation of ions across the membrane. The polypeptide is Ion-translocating oxidoreductase complex subunit A (Shewanella loihica (strain ATCC BAA-1088 / PV-4)).